Reading from the N-terminus, the 383-residue chain is S-adenosylmethionine synthase (383 aa).

His15 is an ATP binding site. Asp17 contributes to the Mg(2+) binding site. Glu43 serves as a coordination point for K(+). Positions 56 and 99 each coordinate L-methionine. A flexible loop region spans residues 99-109; that stretch reads QSPDINQGVDR. ATP-binding positions include 164–166, 230–231, Asp239, 245–246, Ala262, and Lys266; these read DAK, RF, and RK. Asp239 serves as a coordination point for L-methionine. L-methionine is bound at residue Lys270.

Belongs to the AdoMet synthase family. In terms of assembly, homotetramer; dimer of dimers. The cofactor is Mg(2+). Requires K(+) as cofactor.

The protein localises to the cytoplasm. It carries out the reaction L-methionine + ATP + H2O = S-adenosyl-L-methionine + phosphate + diphosphate. Its pathway is amino-acid biosynthesis; S-adenosyl-L-methionine biosynthesis; S-adenosyl-L-methionine from L-methionine: step 1/1. In terms of biological role, catalyzes the formation of S-adenosylmethionine (AdoMet) from methionine and ATP. The overall synthetic reaction is composed of two sequential steps, AdoMet formation and the subsequent tripolyphosphate hydrolysis which occurs prior to release of AdoMet from the enzyme. The sequence is that of S-adenosylmethionine synthase from Shewanella amazonensis (strain ATCC BAA-1098 / SB2B).